A 227-amino-acid polypeptide reads, in one-letter code: Pre-hexon-linking protein VIII (227 aa).

Thr64 carries the post-translational modification Phosphothreonine; by host. The propeptide occupies 112 to 157; that stretch reads FRHRVRSPGQGITHLTIRGRGIQLNDESVSSSLGLRPDGTFQIGGA. A phosphoserine; by host mark is found at Ser118 and Ser174.

Belongs to the adenoviridae hexon-linking protein family. As to quaternary structure, interacts with the peripentonal hexons as well as the hexons in the facets. Part of a complex composed of the core-capsid bridging protein, the endosome lysis protein VI and the hexon-linking protein VIII; these interactions bridge the virus core to the capsid. Cleaved by the viral protease during virion maturation. May cause the middle segment to be shed from the capsid.

It is found in the virion. Its subcellular location is the host nucleus. In terms of biological role, structural component of the virion that acts as a cement protein on the capsid interior and which glue the peripentonal hexons and group-of-nine hexons together. The sequence is that of Pre-hexon-linking protein VIII from Human adenovirus C serotype 5 (HAdV-5).